A 66-amino-acid chain; its full sequence is Protein translocase subunit SecE (66 aa).

A helical membrane pass occupies residues 29–49 (LIASTLVVVAAVFIFSLICLV).

It belongs to the SecE/SEC61-gamma family. In terms of assembly, component of the Sec protein translocase complex. Heterotrimer consisting of SecY, SecE and SecG subunits. The heterotrimers can form oligomers, although 1 heterotrimer is thought to be able to translocate proteins. Interacts with the ribosome. Interacts with SecDF, and other proteins may be involved. Interacts with SecA.

The protein resides in the cell inner membrane. Essential subunit of the Sec protein translocation channel SecYEG. Clamps together the 2 halves of SecY. May contact the channel plug during translocation. In Rickettsia typhi (strain ATCC VR-144 / Wilmington), this protein is Protein translocase subunit SecE.